Here is a 606-residue protein sequence, read N- to C-terminus: MSINFLSIPRNRFKAIGVLSVTCILIYVILHSSIITTDFDVSDYGDKFIPSIIFDDNNDNGENLKDPQPELDNDKGNGETDTTTSNSMTTAHTFWKGIFDTFDKYKMDLGQDPENAVSYVDKLKQKQGPLNKEVLLSKAIVSSELMKHLKEKHSGVVEDLPSVMPGSVYNKGSKGVVIIGGGKFSWLAYLALVQLRNVGSKLPVEIVMPSRADYEKELEFCENTLPEMQASCVVLPDVLGEAVMKNRKFASYQFKALALVVTSFEHILLLDSDNMIVSNPDEIFESKLYHQYGMITWPDYWKRTISPLFYDVAEIEVNENKRVRYNRFPLYNAPNVRSNIYTDQEREEVPFHDLQGSIAELSTESGQLIINKHTHGKTILLALYYNFYGPNLFYKLFSLGEQGEGDKDTFVAAAVVTRQDYYQVKSFIKTFGYADSDDKFQGVSMGQRNPLIDRKHYEDHVLALLEKDSFKSSSIADQIEQMKKFENEDFDQHNSIPLFTVHCNYPKLDPKLYMSRDDLYDEKEKKLKYRLYGNLKYTKEVVKDGETGTEASTDKVQIDFELQQWQHMQDILCLKKIYFTHFIDNDMNELCQFIENQVAWLSKSQN.

Over 1-14 (MSINFLSIPRNRFK) the chain is Cytoplasmic. The helical transmembrane segment at 15–35 (AIGVLSVTCILIYVILHSSII) threads the bilayer. Topologically, residues 36–606 (TTDFDVSDYG…QVAWLSKSQN (571 aa)) are extracellular. Residues 59 to 86 (DNGENLKDPQPELDNDKGNGETDTTTSN) are disordered. Basic and acidic residues predominate over residues 62-78 (ENLKDPQPELDNDKGNG).

It belongs to the MNN1/MNT family.

The protein resides in the golgi apparatus membrane. The protein operates within protein modification; protein glycosylation. Alpha-1,2-mannosyltransferase required for cell wall integrity. Responsible for addition of the first alpha-1,2-linked mannose to form the branches on the mannan backbone of oligosaccharides. Addition of alpha-1,2-mannose is required for stabilization of the alpha-1,6-mannose backbone and hence regulates mannan fibril length; and is important for both immune recognition and virulence. The sequence is that of Alpha-1,2-mannosyltransferase MNN23 (MNN23) from Candida albicans (strain SC5314 / ATCC MYA-2876) (Yeast).